We begin with the raw amino-acid sequence, 349 residues long: Biotin synthase (349 aa).

A Radical SAM core domain is found at 70-295; that stretch reads PEVEVEGIIS…RTMLRFAGGR (226 aa). [4Fe-4S] cluster-binding residues include cysteine 85, cysteine 89, and cysteine 92. [2Fe-2S] cluster is bound by residues cysteine 128, cysteine 161, cysteine 220, and arginine 290.

It belongs to the radical SAM superfamily. Biotin synthase family. As to quaternary structure, homodimer. [4Fe-4S] cluster is required as a cofactor. Requires [2Fe-2S] cluster as cofactor.

It carries out the reaction (4R,5S)-dethiobiotin + (sulfur carrier)-SH + 2 reduced [2Fe-2S]-[ferredoxin] + 2 S-adenosyl-L-methionine = (sulfur carrier)-H + biotin + 2 5'-deoxyadenosine + 2 L-methionine + 2 oxidized [2Fe-2S]-[ferredoxin]. It functions in the pathway cofactor biosynthesis; biotin biosynthesis; biotin from 7,8-diaminononanoate: step 2/2. Functionally, catalyzes the conversion of dethiobiotin (DTB) to biotin by the insertion of a sulfur atom into dethiobiotin via a radical-based mechanism. The chain is Biotin synthase from Mycobacterium bovis (strain ATCC BAA-935 / AF2122/97).